Here is a 295-residue protein sequence, read N- to C-terminus: MQGVLLALVPMFAWGSIGFVANKFGGDAKQQTLGMTLGAFVFALIVFLFRMPTLTWQIFLIGFIGGLLWAIGQFGQFNSMKYMGVSVASPLSSGSQLVIGGLIGVFAFHEWTKQIQFILGFIAMAVLVVGFYFSAKRDPENAVVEEGRNYTKGLTALTYSTLGYVIYVILFNNLAVLWFNVHFDTLTIILPMSVGMIFGALVMGRFKIKMEKYVYQNMIVGAMWGVGNIFMLMAASAAGNAIAFSFSQLGVIVSTIGGILFLGEKKTKKELVYVGIGIVLFVTGAILLAIVKSKG.

10 consecutive transmembrane segments (helical) span residues 4-26 (VLLA…KFGG), 33-50 (LGMT…FLFR), 54-72 (LTWQ…WAIG), 85-107 (VSVA…GVFA), 117-135 (FILG…YFSA), 156-178 (ALTY…AVLW), 188-206 (IILP…MGRF), 213-235 (YVYQ…LMAA), 241-263 (AIAF…LFLG), and 270-291 (ELVY…LAIV).

It belongs to the GRP transporter (TC 2.A.7.5) family.

It is found in the cell membrane. This is Putative sugar uptake protein YxfA (yxfA) from Lactococcus lactis subsp. lactis (strain IL1403) (Streptococcus lactis).